We begin with the raw amino-acid sequence, 514 residues long: ATP synthase subunit alpha (514 aa).

170–177 (GDRQIGKT) provides a ligand contact to ATP.

Belongs to the ATPase alpha/beta chains family. In terms of assembly, F-type ATPases have 2 components, CF(1) - the catalytic core - and CF(0) - the membrane proton channel. CF(1) has five subunits: alpha(3), beta(3), gamma(1), delta(1), epsilon(1). CF(0) has three main subunits: a(1), b(2) and c(9-12). The alpha and beta chains form an alternating ring which encloses part of the gamma chain. CF(1) is attached to CF(0) by a central stalk formed by the gamma and epsilon chains, while a peripheral stalk is formed by the delta and b chains.

It is found in the cell inner membrane. The enzyme catalyses ATP + H2O + 4 H(+)(in) = ADP + phosphate + 5 H(+)(out). Functionally, produces ATP from ADP in the presence of a proton gradient across the membrane. The alpha chain is a regulatory subunit. This is ATP synthase subunit alpha from Pseudomonas putida (strain ATCC 700007 / DSM 6899 / JCM 31910 / BCRC 17059 / LMG 24140 / F1).